The sequence spans 137 residues: Glutamate mutase sigma subunit (137 aa).

In terms of domain architecture, B12-binding spans 3 to 137; it reads KKTIVLGVIG…ADLKKDLNIE (135 aa). Residues 13 to 17, His-16, 61 to 63, and 93 to 97 each bind adenosylcob(III)alamin; these read SDCHA, SSL, and NIVVG.

This sequence belongs to the methylaspartate mutase GlmS subunit family. As to quaternary structure, heterotetramer composed of 2 epsilon subunits (GlmE) and 2 sigma subunits (GlmS). GlmE exists as a homodimer and GlmS as a monomer. The cofactor is adenosylcob(III)alamin.

The enzyme catalyses (2S,3S)-3-methyl-L-aspartate = L-glutamate. The protein operates within amino-acid degradation; L-glutamate degradation via mesaconate pathway; acetate and pyruvate from L-glutamate: step 1/4. Competitively inhibited by (2S,4S)-4-fluoroglutamate, 2-methyleneglutarate, (2R,3RS)-3-fluoroglutamate and (S)-3-methylitaconate. Its function is as follows. Catalyzes the carbon skeleton rearrangement of L-glutamate to L-threo-3-methylaspartate ((2S,3S)-3-methylaspartate). The polypeptide is Glutamate mutase sigma subunit (Clostridium cochlearium).